Consider the following 697-residue polypeptide: Elongation factor G (697 aa).

The tr-type G domain maps to 8–283 (EHIRNIGICA…AVVDFLPSPT (276 aa)). GTP is bound by residues 17–24 (AHIDAGKT), 81–85 (DTPGH), and 135–138 (NKMD).

This sequence belongs to the TRAFAC class translation factor GTPase superfamily. Classic translation factor GTPase family. EF-G/EF-2 subfamily.

It localises to the cytoplasm. In terms of biological role, catalyzes the GTP-dependent ribosomal translocation step during translation elongation. During this step, the ribosome changes from the pre-translocational (PRE) to the post-translocational (POST) state as the newly formed A-site-bound peptidyl-tRNA and P-site-bound deacylated tRNA move to the P and E sites, respectively. Catalyzes the coordinated movement of the two tRNA molecules, the mRNA and conformational changes in the ribosome. The chain is Elongation factor G from Rickettsia massiliae (strain Mtu5).